The following is a 442-amino-acid chain: tRNA modification GTPase MnmE (442 aa).

(6S)-5-formyl-5,6,7,8-tetrahydrofolate is bound by residues arginine 22, glutamate 79, and lysine 118. Positions 215–365 constitute a TrmE-type G domain; sequence EIPIAIVGRP…LEKAILFEYQ (151 aa). Asparagine 225 is a K(+) binding site. GTP-binding positions include 225-230, 244-250, and 269-272; these read NVGKSS, TNIEGTT, and DTAG. Serine 229 is a Mg(2+) binding site. Residues threonine 244, isoleucine 246, and threonine 249 each coordinate K(+). Mg(2+) is bound at residue threonine 250. Lysine 442 provides a ligand contact to (6S)-5-formyl-5,6,7,8-tetrahydrofolate.

This sequence belongs to the TRAFAC class TrmE-Era-EngA-EngB-Septin-like GTPase superfamily. TrmE GTPase family. In terms of assembly, homodimer. Heterotetramer of two MnmE and two MnmG subunits. K(+) is required as a cofactor.

Its subcellular location is the cytoplasm. Exhibits a very high intrinsic GTPase hydrolysis rate. Involved in the addition of a carboxymethylaminomethyl (cmnm) group at the wobble position (U34) of certain tRNAs, forming tRNA-cmnm(5)s(2)U34. This chain is tRNA modification GTPase MnmE, found in Mycoplasmopsis pulmonis (strain UAB CTIP) (Mycoplasma pulmonis).